A 243-amino-acid chain; its full sequence is UDP-2,3-diacylglucosamine hydrolase (243 aa).

Mn(2+)-binding residues include aspartate 8, histidine 10, aspartate 41, asparagine 79, and histidine 114. Residue 79 to 80 participates in substrate binding; it reads NR. Substrate is bound by residues aspartate 122, lysine 164, lysine 167, and histidine 195. Mn(2+) is bound by residues histidine 195 and histidine 197.

The protein belongs to the LpxH family. The cofactor is Mn(2+).

Its subcellular location is the cell inner membrane. It catalyses the reaction UDP-2-N,3-O-bis[(3R)-3-hydroxytetradecanoyl]-alpha-D-glucosamine + H2O = 2-N,3-O-bis[(3R)-3-hydroxytetradecanoyl]-alpha-D-glucosaminyl 1-phosphate + UMP + 2 H(+). It functions in the pathway glycolipid biosynthesis; lipid IV(A) biosynthesis; lipid IV(A) from (3R)-3-hydroxytetradecanoyl-[acyl-carrier-protein] and UDP-N-acetyl-alpha-D-glucosamine: step 4/6. In terms of biological role, hydrolyzes the pyrophosphate bond of UDP-2,3-diacylglucosamine to yield 2,3-diacylglucosamine 1-phosphate (lipid X) and UMP by catalyzing the attack of water at the alpha-P atom. Involved in the biosynthesis of lipid A, a phosphorylated glycolipid that anchors the lipopolysaccharide to the outer membrane of the cell. This Vibrio vulnificus (strain CMCP6) protein is UDP-2,3-diacylglucosamine hydrolase.